The primary structure comprises 140 residues: FLYWCH family member 2 (140 aa).

Disordered stretches follow at residues 1–39 and 84–140; these read MPLPEPSEQEGESVKASQEPSPKPGTEVIPAAPRKPRKF and HPEA…GKSL. A Phosphoserine modification is found at Ser-21. Residues 98–114 show a composition bias toward basic and acidic residues; the sequence is PEQKRSRQDPGTDRTED. Over residues 118–127 the composition is skewed to low complexity; the sequence is AAGPPEAAGE.

The protein is FLYWCH family member 2 (FLYWCH2) of Homo sapiens (Human).